A 450-amino-acid polypeptide reads, in one-letter code: Tubulin alpha chain (450 aa).

Gln-11 serves as a coordination point for GTP. At Lys-40 the chain carries N6-acetyllysine. The GTP site is built by Glu-71, Ser-140, Gly-144, Thr-145, Thr-179, Asn-206, and Asn-228. Glu-71 is a Mg(2+) binding site. Glu-254 is a catalytic residue.

The protein belongs to the tubulin family. In terms of assembly, dimer of alpha and beta chains. A typical microtubule is a hollow water-filled tube with an outer diameter of 25 nm and an inner diameter of 15 nM. Alpha-beta heterodimers associate head-to-tail to form protofilaments running lengthwise along the microtubule wall with the beta-tubulin subunit facing the microtubule plus end conferring a structural polarity. Microtubules usually have 13 protofilaments but different protofilament numbers can be found in some organisms and specialized cells. Requires Mg(2+) as cofactor. In terms of processing, undergoes a tyrosination/detyrosination cycle, the cyclic removal and re-addition of a C-terminal tyrosine residue by the enzymes tubulin tyrosine carboxypeptidase (TTCP) and tubulin tyrosine ligase (TTL), respectively. Post-translationally, acetylation of alpha chains at Lys-40 stabilizes microtubules and affects affinity and processivity of microtubule motors. This modification has a role in multiple cellular functions, ranging from cell motility, cell cycle progression or cell differentiation to intracellular trafficking and signaling.

It localises to the cytoplasm. It is found in the cytoskeleton. The enzyme catalyses GTP + H2O = GDP + phosphate + H(+). Tubulin is the major constituent of microtubules, a cylinder consisting of laterally associated linear protofilaments composed of alpha- and beta-tubulin heterodimers. Microtubules grow by the addition of GTP-tubulin dimers to the microtubule end, where a stabilizing cap forms. Below the cap, tubulin dimers are in GDP-bound state, owing to GTPase activity of alpha-tubulin. This Haemonchus contortus (Barber pole worm) protein is Tubulin alpha chain.